The chain runs to 437 residues: Citrate synthase (437 aa).

Catalysis depends on residues His316 and Asp372.

The protein belongs to the citrate synthase family. Homohexamer.

The enzyme catalyses oxaloacetate + acetyl-CoA + H2O = citrate + CoA + H(+). Its pathway is carbohydrate metabolism; tricarboxylic acid cycle; isocitrate from oxaloacetate: step 1/2. With respect to regulation, weakly inhibited by ATP (apparent Ki = 10 mm). The protein is Citrate synthase (gltA) of Corynebacterium glutamicum (strain ATCC 13032 / DSM 20300 / JCM 1318 / BCRC 11384 / CCUG 27702 / LMG 3730 / NBRC 12168 / NCIMB 10025 / NRRL B-2784 / 534).